The chain runs to 84 residues: Small ribosomal subunit protein bS18 (84 aa).

Belongs to the bacterial ribosomal protein bS18 family. As to quaternary structure, part of the 30S ribosomal subunit. Forms a tight heterodimer with protein bS6.

Its function is as follows. Binds as a heterodimer with protein bS6 to the central domain of the 16S rRNA, where it helps stabilize the platform of the 30S subunit. The chain is Small ribosomal subunit protein bS18 from Maricaulis maris (strain MCS10) (Caulobacter maris).